The following is a 384-amino-acid chain: DNA replication and repair protein RecF (384 aa).

Residue G30–S37 participates in ATP binding.

It belongs to the RecF family.

The protein localises to the cytoplasm. Functionally, the RecF protein is involved in DNA metabolism; it is required for DNA replication and normal SOS inducibility. RecF binds preferentially to single-stranded, linear DNA. It also seems to bind ATP. The polypeptide is DNA replication and repair protein RecF (Gloeothece citriformis (strain PCC 7424) (Cyanothece sp. (strain PCC 7424))).